A 198-amino-acid chain; its full sequence is GTP cyclohydrolase 1 (198 aa).

Residues Cys-87, His-90, and Cys-158 each contribute to the Zn(2+) site.

This sequence belongs to the GTP cyclohydrolase I family. In terms of assembly, homomer.

It catalyses the reaction GTP + H2O = 7,8-dihydroneopterin 3'-triphosphate + formate + H(+). Its pathway is cofactor biosynthesis; 7,8-dihydroneopterin triphosphate biosynthesis; 7,8-dihydroneopterin triphosphate from GTP: step 1/1. The sequence is that of GTP cyclohydrolase 1 from Janthinobacterium sp. (strain Marseille) (Minibacterium massiliensis).